Consider the following 206-residue polypeptide: LexA repressor (206 aa).

The segment at residues 28-48 (VREICAAVGLSSTSTVHGHLT) is a DNA-binding region (H-T-H motif). Residues Ser-127 and Lys-165 each act as for autocatalytic cleavage activity in the active site.

The protein belongs to the peptidase S24 family. Homodimer.

It catalyses the reaction Hydrolysis of Ala-|-Gly bond in repressor LexA.. Its function is as follows. Represses a number of genes involved in the response to DNA damage (SOS response), including recA and lexA. In the presence of single-stranded DNA, RecA interacts with LexA causing an autocatalytic cleavage which disrupts the DNA-binding part of LexA, leading to derepression of the SOS regulon and eventually DNA repair. The chain is LexA repressor from Lactobacillus delbrueckii subsp. bulgaricus (strain ATCC 11842 / DSM 20081 / BCRC 10696 / JCM 1002 / NBRC 13953 / NCIMB 11778 / NCTC 12712 / WDCM 00102 / Lb 14).